The chain runs to 446 residues: Tubulin beta-2 chain (446 aa).

Q11, E69, S138, G142, T143, G144, N204, and N226 together coordinate GTP. E69 serves as a coordination point for Mg(2+). A disordered region spans residues 424–446; sequence QYQEATADEEGEFDEDEEGGGDE. A compositionally biased stretch (acidic residues) spans 429–446; the sequence is TADEEGEFDEDEEGGGDE.

The protein belongs to the tubulin family. As to quaternary structure, dimer of alpha and beta chains. A typical microtubule is a hollow water-filled tube with an outer diameter of 25 nm and an inner diameter of 15 nM. Alpha-beta heterodimers associate head-to-tail to form protofilaments running lengthwise along the microtubule wall with the beta-tubulin subunit facing the microtubule plus end conferring a structural polarity. Microtubules usually have 13 protofilaments but different protofilament numbers can be found in some organisms and specialized cells. Requires Mg(2+) as cofactor. As to expression, testis specific.

The protein resides in the cytoplasm. Its subcellular location is the cytoskeleton. Tubulin is the major constituent of microtubules, a cylinder consisting of laterally associated linear protofilaments composed of alpha- and beta-tubulin heterodimers. Microtubules grow by the addition of GTP-tubulin dimers to the microtubule end, where a stabilizing cap forms. Below the cap, tubulin dimers are in GDP-bound state, owing to GTPase activity of alpha-tubulin. The polypeptide is Tubulin beta-2 chain (betaTub85D) (Drosophila melanogaster (Fruit fly)).